The following is a 92-amino-acid chain: Putative transcription elongation factor S-II-like protein 81R (92 aa).

A TFIIS-type zinc finger spans residues G51 to T91. Zn(2+) is bound by residues C55, C58, C83, and C86.

This chain is Putative transcription elongation factor S-II-like protein 81R, found in Dryophytes versicolor (chameleon treefrog).